We begin with the raw amino-acid sequence, 259 residues long: Activator of lactoyl-CoA dehydratase (259 aa).

2 residues coordinate [4Fe-4S] cluster: cysteine 125 and cysteine 164.

In terms of assembly, homodimer. The cofactor is [4Fe-4S] cluster.

Its function is as follows. Required for the activation of lactoyl-CoA dehydratase. This protein is extremely sensitive towards oxygen. The polypeptide is Activator of lactoyl-CoA dehydratase (lcdC) (Anaerotignum propionicum (Clostridium propionicum)).